A 185-amino-acid chain; its full sequence is Ribosome-recycling factor (185 aa).

The protein belongs to the RRF family.

The protein localises to the cytoplasm. Functionally, responsible for the release of ribosomes from messenger RNA at the termination of protein biosynthesis. May increase the efficiency of translation by recycling ribosomes from one round of translation to another. The chain is Ribosome-recycling factor from Clostridium kluyveri (strain NBRC 12016).